The primary structure comprises 373 residues: MEDFIYYNGKKYRKGYTTGTCAAAAAKACVEMILTQEEVSAVQVTTTGGTILEIPVAHQQFSKKRATAAVQKDGGDDIDATHGMWIFVDVELTNSTEVVLDGGVGIGRATQKGISVAVGEAAINPAPRKNILEAVRKSLGEHRGANILVYAPEGEERAKRTMNSNLGIIGGISILGTTGIVTPMSDEGWKKSLSMELEMKRNQGLEQIILVPGNYGDDFVQHTLGFSSNNIVSMSNFVGYMLKETQRLAFKKVLMVGHFGKLVKVSAGIFTTYSKDADARAEILVANLALLGAPLSLLQEVEKCNTTEAAGELIEEAGYTHVYEVIAQKIKARSERFLKFTKPSVEIDVVTFSTERGLLATTKDIDVLREEWQ.

This sequence belongs to the CbiD family.

It carries out the reaction Co-precorrin-5B + S-adenosyl-L-methionine = Co-precorrin-6A + S-adenosyl-L-homocysteine. Its pathway is cofactor biosynthesis; adenosylcobalamin biosynthesis; cob(II)yrinate a,c-diamide from sirohydrochlorin (anaerobic route): step 6/10. Functionally, catalyzes the methylation of C-1 in cobalt-precorrin-5B to form cobalt-precorrin-6A. In Listeria welshimeri serovar 6b (strain ATCC 35897 / DSM 20650 / CCUG 15529 / CIP 8149 / NCTC 11857 / SLCC 5334 / V8), this protein is Cobalt-precorrin-5B C(1)-methyltransferase.